The primary structure comprises 130 residues: Probable pilin MJ0835.1 (130 aa).

A propeptide spanning residues Met1–Ala14 is cleaved from the precursor. The QXSXEXXXL signature appears at Gln15 to Leu23.

The N-terminus is cleaved by the prepilin peptidase EppA, which recognizes the class III signal sequence.

The protein localises to the secreted. It localises to the cell surface. The protein resides in the fimbrium. This Methanocaldococcus jannaschii (strain ATCC 43067 / DSM 2661 / JAL-1 / JCM 10045 / NBRC 100440) (Methanococcus jannaschii) protein is Probable pilin MJ0835.1.